The primary structure comprises 172 residues: Large ribosomal subunit protein uL10 (172 aa).

This sequence belongs to the universal ribosomal protein uL10 family. As to quaternary structure, part of the ribosomal stalk of the 50S ribosomal subunit. The N-terminus interacts with L11 and the large rRNA to form the base of the stalk. The C-terminus forms an elongated spine to which L12 dimers bind in a sequential fashion forming a multimeric L10(L12)X complex.

Its function is as follows. Forms part of the ribosomal stalk, playing a central role in the interaction of the ribosome with GTP-bound translation factors. In Brucella suis biovar 1 (strain 1330), this protein is Large ribosomal subunit protein uL10.